A 104-amino-acid polypeptide reads, in one-letter code: Thioredoxin 1 (104 aa).

The Thioredoxin domain maps to 2-104; sequence VKIVTSQAEF…LKQLIEKYAA (103 aa). Residues Cys-30 and Cys-33 each act as nucleophile in the active site. A disulfide bridge links Cys-30 with Cys-33.

Belongs to the thioredoxin family. The disulfide bond between Cys-30 and Cys-33 acts as a redox-active center and is reduced by thioredoxin reductase TRXR.

Its subcellular location is the cytoplasm. Functionally, participates in various redox reactions through the reversible oxidation of its active center dithiol to a disulfide and catalyzes dithiol-disulfide exchange reactions. By modifying the redox status of targeted proteins, induces changes in their structure and activity. Reduces oxidized glutathione (GSSG), thereby acting as a backup for the glutathione redox system. Reduces nitroglutathione (GSNO), a compound involved in the transport of nitric oxide (NO). Also reduces oxidative stress by detoxifying hydrogen peroxide, tert-butyl hydroperoxide and cumene hydroperoxide. Activates ornithine aminotransferase OAT by reducing a disulfide bond in the substrate binding loop, thereby enhancing the affinity of OAT for its substrates. May reduce S-adenosyl-L-homocysteine hydrolase SAHH. This is Thioredoxin 1 from Plasmodium falciparum (isolate 3D7).